A 225-amino-acid chain; its full sequence is tRNA (guanine-N(1)-)-methyltransferase (225 aa).

S-adenosyl-L-methionine is bound by residues G112 and 132–137 (IGDYVL).

Belongs to the RNA methyltransferase TrmD family. Homodimer.

It is found in the cytoplasm. It catalyses the reaction guanosine(37) in tRNA + S-adenosyl-L-methionine = N(1)-methylguanosine(37) in tRNA + S-adenosyl-L-homocysteine + H(+). Specifically methylates guanosine-37 in various tRNAs. The sequence is that of tRNA (guanine-N(1)-)-methyltransferase from Porphyromonas gingivalis (strain ATCC 33277 / DSM 20709 / CIP 103683 / JCM 12257 / NCTC 11834 / 2561).